A 160-amino-acid chain; its full sequence is Prostaglandin E synthase 3 (160 aa).

A CS domain is found at 1–90 (MQPASAKWYD…ESGQSWPRLT (90 aa)). Lys-33 is modified (N6-acetyllysine). Lys-35 is covalently cross-linked (Glycyl lysine isopeptide (Lys-Gly) (interchain with G-Cter in SUMO2)). A Phosphoserine modification is found at Ser-44. Residue Lys-65 forms a Glycyl lysine isopeptide (Lys-Gly) (interchain with G-Cter in SUMO2) linkage. Phosphoserine is present on residues Ser-85, Ser-100, Ser-113, and Ser-118. The interval 118 to 160 (SNFDRFSEMMDHMGGDEDVDLPEVDGADDDSQDSDDEKMPDLE) is disordered. The segment covering 122–132 (RFSEMMDHMGG) has biased composition (basic and acidic residues). Residues 133–153 (DEDVDLPEVDGADDDSQDSDD) show a composition bias toward acidic residues. Phosphoserine is present on residues Ser-148 and Ser-151. The short motif at 157-160 (PDLE) is the PXLE motif element.

Belongs to the p23/wos2 family. Probably forms a complex composed of chaperones HSP90 and HSP70, co-chaperones STIP1/HOP, CDC37, PPP5C, PTGES3/p23, TSC1 and client protein TSC2. Binds to the progesterone receptor. Interacts with TERT; the interaction, together with HSP90AA1, is required for correct assembly and stabilization of the telomerase holoenzyme complex. Interacts (via PXLE motif) with EGLN1/PHD2, recruiting EGLN1/PHD2 to the HSP90 pathway to facilitate HIF alpha proteins hydroxylation. Interacts with HSP90AA1, FLCN, FNIP1 and FNIP2. In terms of processing, proteolytically cleaved by caspase-7 (CASP7) in response to apoptosis, leading to its inactivation. As to expression, expressed in testis, kidney, bladder and ovary.

Its subcellular location is the cytoplasm. It carries out the reaction prostaglandin H2 = prostaglandin E2. The protein operates within lipid metabolism; prostaglandin biosynthesis. Its function is as follows. Cytosolic prostaglandin synthase that catalyzes the oxidoreduction of prostaglandin endoperoxide H2 (PGH2) to prostaglandin E2 (PGE2). Molecular chaperone that localizes to genomic response elements in a hormone-dependent manner and disrupts receptor-mediated transcriptional activation, by promoting disassembly of transcriptional regulatory complexes. Facilitates HIF alpha proteins hydroxylation via interaction with EGLN1/PHD2, leading to recruit EGLN1/PHD2 to the HSP90 pathway. The protein is Prostaglandin E synthase 3 (Ptges3) of Mus musculus (Mouse).